Here is a 139-residue protein sequence, read N- to C-terminus: Large ribosomal subunit protein uL13 (139 aa).

Belongs to the universal ribosomal protein uL13 family. Part of the 50S ribosomal subunit.

In terms of biological role, this protein is one of the early assembly proteins of the 50S ribosomal subunit, although it is not seen to bind rRNA by itself. It is important during the early stages of 50S assembly. The polypeptide is Large ribosomal subunit protein uL13 (Methanococcoides burtonii (strain DSM 6242 / NBRC 107633 / OCM 468 / ACE-M)).